Here is a 128-residue protein sequence, read N- to C-terminus: UPF0212 protein TGAM_1344 (128 aa).

It belongs to the UPF0212 family.

In Thermococcus gammatolerans (strain DSM 15229 / JCM 11827 / EJ3), this protein is UPF0212 protein TGAM_1344.